The chain runs to 256 residues: LexA repressor (256 aa).

The interval 1 to 31 (MTSQGRGTRRGGTRGNVRAFPEGPTDAGLTP) is disordered. The H-T-H motif DNA-binding region spans 53 to 73 (VREIGEAVGLTSTSSVAHQLK). Catalysis depends on for autocatalytic cleavage activity residues Ser180 and Lys217.

Belongs to the peptidase S24 family. In terms of assembly, homodimer.

The enzyme catalyses Hydrolysis of Ala-|-Gly bond in repressor LexA.. Its function is as follows. Represses a number of genes involved in the response to DNA damage (SOS response), including recA and lexA. In the presence of single-stranded DNA, RecA interacts with LexA causing an autocatalytic cleavage which disrupts the DNA-binding part of LexA, leading to derepression of the SOS regulon and eventually DNA repair. This chain is LexA repressor, found in Frankia casuarinae (strain DSM 45818 / CECT 9043 / HFP020203 / CcI3).